Reading from the N-terminus, the 205-residue chain is Thymidylate kinase (205 aa).

Position 10–17 (10–17 (GIDGAGKS)) interacts with ATP.

The protein belongs to the thymidylate kinase family.

It catalyses the reaction dTMP + ATP = dTDP + ADP. Functionally, phosphorylation of dTMP to form dTDP in both de novo and salvage pathways of dTTP synthesis. This Ralstonia pickettii (strain 12J) protein is Thymidylate kinase.